The primary structure comprises 112 residues: Large ribosomal subunit protein P1 (112 aa).

Positions 80-112 (AAAAPAAESKKEEKKKEEESDQSDDDMGFGLFD) are disordered. Residues 87–97 (ESKKEEKKKEE) show a composition bias toward basic and acidic residues. A phosphoserine mark is found at serine 99 and serine 102.

It belongs to the eukaryotic ribosomal protein P1/P2 family. As to quaternary structure, P1 and P2 exist as dimers at the large ribosomal subunit.

Plays an important role in the elongation step of protein synthesis. The polypeptide is Large ribosomal subunit protein P1 (RpLP1) (Drosophila melanogaster (Fruit fly)).